Reading from the N-terminus, the 984-residue chain is Translation initiation factor IF-2 (984 aa).

2 disordered regions span residues 92 to 267 and 280 to 392; these read KKRT…ERRR and MNAP…EEHV. Residues 104–123 are compositionally biased toward low complexity; the sequence is PATPEVQPVAEAPAAAPAAP. Over residues 124-177 the composition is skewed to basic and acidic residues; the sequence is RIDEAELARREEEARRQAELIRRQEEELAEKRRLREEAEAREREQAEKAERAEQ. Positions 193-235 are enriched in low complexity; that stretch reads DAAAAAPAKEAAKPAAAPVAAAAAAAEQQAADTKLAAQTAATQ. Composition is skewed to basic and acidic residues over residues 236–267 and 291–302; these read AKED…ERRR and KAPEKPQPEKAA. Residues 310–335 are compositionally biased toward low complexity; sequence PAAPAARPGAPAAPGAAAAPGAAGAG. A compositionally biased stretch (basic and acidic residues) spans 351-361; the sequence is PAKKKEIKTRG. Over residues 363 to 375 the composition is skewed to gly residues; that stretch reads ASGGVGRGNWRGG. A compositionally biased stretch (basic and acidic residues) spans 381-392; it reads GSNDRGGHEEHV. Residues 484 to 653 enclose the tr-type G domain; it reads PRAPVVTVMG…LLQAEVLELK (170 aa). The interval 493–500 is G1; the sequence is GHVDHGKT. 493–500 serves as a coordination point for GTP; sequence GHVDHGKT. Residues 518–522 form a G2 region; sequence GITQH. The tract at residues 539 to 542 is G3; it reads DTPG. GTP is bound by residues 539–543 and 593–596; these read DTPGH and NKID. Positions 593–596 are G4; that stretch reads NKID. Residues 629–631 are G5; the sequence is SAK.

Belongs to the TRAFAC class translation factor GTPase superfamily. Classic translation factor GTPase family. IF-2 subfamily.

It localises to the cytoplasm. Functionally, one of the essential components for the initiation of protein synthesis. Protects formylmethionyl-tRNA from spontaneous hydrolysis and promotes its binding to the 30S ribosomal subunits. Also involved in the hydrolysis of GTP during the formation of the 70S ribosomal complex. In Variovorax paradoxus (strain S110), this protein is Translation initiation factor IF-2.